We begin with the raw amino-acid sequence, 389 residues long: Succinate--CoA ligase [ADP-forming] subunit beta (389 aa).

The ATP-grasp domain maps to Lys-9–Thr-244. Residues Lys-46, Gly-53–Gly-55, Gly-102, and Glu-107 each bind ATP. Mg(2+) is bound by residues Asn-199 and Asp-213. Substrate-binding positions include Asn-264 and Gly-321–Val-323.

This sequence belongs to the succinate/malate CoA ligase beta subunit family. In terms of assembly, heterotetramer of two alpha and two beta subunits. Mg(2+) serves as cofactor.

The enzyme catalyses succinate + ATP + CoA = succinyl-CoA + ADP + phosphate. The catalysed reaction is GTP + succinate + CoA = succinyl-CoA + GDP + phosphate. The protein operates within carbohydrate metabolism; tricarboxylic acid cycle; succinate from succinyl-CoA (ligase route): step 1/1. Functionally, succinyl-CoA synthetase functions in the citric acid cycle (TCA), coupling the hydrolysis of succinyl-CoA to the synthesis of either ATP or GTP and thus represents the only step of substrate-level phosphorylation in the TCA. The beta subunit provides nucleotide specificity of the enzyme and binds the substrate succinate, while the binding sites for coenzyme A and phosphate are found in the alpha subunit. The chain is Succinate--CoA ligase [ADP-forming] subunit beta from Xanthomonas axonopodis pv. citri (strain 306).